The chain runs to 702 residues: Polyribonucleotide nucleotidyltransferase (702 aa).

Mg(2+)-binding residues include aspartate 485 and aspartate 491. In terms of domain architecture, KH spans 552–611 (PKTSTLQIDPEKIRDVIGAGGKVINKIIADTGVKIDIKEDGLVYVSSAESEGVKEAVKII). Residues 621-689 (GEIYLGKVTK…SQGRINLSRK (69 aa)) enclose the S1 motif domain.

It belongs to the polyribonucleotide nucleotidyltransferase family. Mg(2+) serves as cofactor.

The protein resides in the cytoplasm. It carries out the reaction RNA(n+1) + phosphate = RNA(n) + a ribonucleoside 5'-diphosphate. Functionally, involved in mRNA degradation. Catalyzes the phosphorolysis of single-stranded polyribonucleotides processively in the 3'- to 5'-direction. The chain is Polyribonucleotide nucleotidyltransferase from Clostridium perfringens (strain 13 / Type A).